A 389-amino-acid chain; its full sequence is Chorismate synthase (389 aa).

NADP(+)-binding residues include Arg-39 and Arg-45. FMN-binding positions include 130–132 (RSS), 251–252 (NA), Gly-296, 311–315 (KPIPT), and Arg-338.

This sequence belongs to the chorismate synthase family. Homotetramer. FMNH2 serves as cofactor.

The enzyme catalyses 5-O-(1-carboxyvinyl)-3-phosphoshikimate = chorismate + phosphate. Its pathway is metabolic intermediate biosynthesis; chorismate biosynthesis; chorismate from D-erythrose 4-phosphate and phosphoenolpyruvate: step 7/7. Its function is as follows. Catalyzes the anti-1,4-elimination of the C-3 phosphate and the C-6 proR hydrogen from 5-enolpyruvylshikimate-3-phosphate (EPSP) to yield chorismate, which is the branch point compound that serves as the starting substrate for the three terminal pathways of aromatic amino acid biosynthesis. This reaction introduces a second double bond into the aromatic ring system. The sequence is that of Chorismate synthase from Oceanobacillus iheyensis (strain DSM 14371 / CIP 107618 / JCM 11309 / KCTC 3954 / HTE831).